The sequence spans 64 residues: Long neurotoxin MS2 (64 aa).

Disulfide bonds link Cys3–Cys24, Cys6–Cys11, Cys17–Cys41, Cys45–Cys57, and Cys58–Cys63.

It belongs to the three-finger toxin family. Ancestral subfamily. In terms of tissue distribution, expressed by the venom gland.

It localises to the secreted. Functionally, produces peripheral paralysis by blocking neuromuscular transmission at the postsynaptic site. Very weak inhibitor of the endogenous nicotinic acetylcholine receptors (nAChR) in the human rhabdomyosarcoma TE 671 cell line. Not toxic to mice by intraperitoneal injection or to zebrafish by injection at the back of the dorsolateral region. This is Long neurotoxin MS2 from Micrurus surinamensis (Surinam coral snake).